The sequence spans 147 residues: Protein disulfide isomerase-like 5-1 (147 aa).

Residues 1 to 29 (MDLAPGRRARLLVALALVVLVALAARSGA) form the signal peptide. Residues 30-137 (EVITLTEETF…LKNFVSDEAE (108 aa)) form the Thioredoxin domain. Catalysis depends on nucleophile residues C59 and C62. A disulfide bridge links C59 with C62.

It belongs to the protein disulfide isomerase family.

Acts as a protein-folding catalyst that interacts with nascent polypeptides to catalyze the formation, isomerization, and reduction or oxidation of disulfide bonds. May play a role in storage protein biogenesis. This chain is Protein disulfide isomerase-like 5-1 (PDIL5-1), found in Oryza sativa subsp. japonica (Rice).